A 226-amino-acid polypeptide reads, in one-letter code: Ribosomal RNA small subunit methyltransferase G (226 aa).

S-adenosyl-L-methionine is bound by residues glycine 86, leucine 91, 137–138, and arginine 150; that span reads VE.

The protein belongs to the methyltransferase superfamily. RNA methyltransferase RsmG family.

Its subcellular location is the cytoplasm. The catalysed reaction is guanosine(527) in 16S rRNA + S-adenosyl-L-methionine = N(7)-methylguanosine(527) in 16S rRNA + S-adenosyl-L-homocysteine. Specifically methylates the N7 position of guanine in position 527 of 16S rRNA. In Polaromonas sp. (strain JS666 / ATCC BAA-500), this protein is Ribosomal RNA small subunit methyltransferase G.